Here is a 554-residue protein sequence, read N- to C-terminus: Valerianol synthase TPS8 (554 aa).

The short motif at 288 to 292 (QHSVG) is the DDXXD motif element. Residues aspartate 307, aspartate 311, aspartate 452, serine 456, and glutamate 460 each coordinate Mg(2+).

It belongs to the terpene synthase family. The cofactor is Mg(2+).

The enzyme catalyses (2E,6E)-farnesyl diphosphate + H2O = valerianol + diphosphate. The protein operates within secondary metabolite biosynthesis; terpenoid biosynthesis. Terpene synthase that catalyzes the biosynthesis of the terpene valerianol. The polypeptide is Valerianol synthase TPS8 (Camellia sinensis (Tea plant)).